The sequence spans 288 residues: Acetyl-coenzyme A carboxylase carboxyl transferase subunit beta (288 aa).

Residues 32–288 (LFAKCPACKH…LELHTEVENV (257 aa)) enclose the CoA carboxyltransferase N-terminal domain. Residues C36, C39, C54, and C57 each contribute to the Zn(2+) site. The C4-type zinc finger occupies 36–57 (CPACKHTIYQKDLGKNKVCPNC).

It belongs to the AccD/PCCB family. As to quaternary structure, acetyl-CoA carboxylase is a heterohexamer composed of biotin carboxyl carrier protein (AccB), biotin carboxylase (AccC) and two subunits each of ACCase subunit alpha (AccA) and ACCase subunit beta (AccD). Zn(2+) serves as cofactor.

Its subcellular location is the cytoplasm. The enzyme catalyses N(6)-carboxybiotinyl-L-lysyl-[protein] + acetyl-CoA = N(6)-biotinyl-L-lysyl-[protein] + malonyl-CoA. The protein operates within lipid metabolism; malonyl-CoA biosynthesis; malonyl-CoA from acetyl-CoA: step 1/1. Its function is as follows. Component of the acetyl coenzyme A carboxylase (ACC) complex. Biotin carboxylase (BC) catalyzes the carboxylation of biotin on its carrier protein (BCCP) and then the CO(2) group is transferred by the transcarboxylase to acetyl-CoA to form malonyl-CoA. The chain is Acetyl-coenzyme A carboxylase carboxyl transferase subunit beta from Lactococcus lactis subsp. cremoris (strain MG1363).